Consider the following 299-residue polypeptide: Probable inactive heme oxygenase 2, chloroplastic (299 aa).

Over residues 1-15 (MASLLRPTPLLSTPR) the composition is skewed to low complexity. Disordered regions lie at residues 1 to 20 (MASL…LTHS), 45 to 70 (LCRS…KQYP), and 96 to 126 (DLSE…EETW). The transit peptide at 1-83 (MASLLRPTPL…IGITEEMRFV (83 aa)) directs the protein to the chloroplast. The segment covering 46–57 (CRSTPTPSQQKA) has biased composition (polar residues). Basic residues predominate over residues 58–67 (SQRKRTRYRK). The segment covering 105–122 (EKEEEEEEEDDDDDDEVK) has biased composition (acidic residues).

Belongs to the heme oxygenase family. As to expression, widely expressed at low levels.

It localises to the plastid. Its subcellular location is the chloroplast. Its function is as follows. Probable inactive heme oxygenase. Binds protoporphyrin IX, a precursor for both heme and chlorophyll biosynthesis. Plays a minor role in phytochrome assembly and photomorphogenesis. In Arabidopsis thaliana (Mouse-ear cress), this protein is Probable inactive heme oxygenase 2, chloroplastic (HO2).